Consider the following 442-residue polypeptide: Histidine--tRNA ligase (442 aa).

It belongs to the class-II aminoacyl-tRNA synthetase family. In terms of assembly, homodimer.

The protein localises to the cytoplasm. It carries out the reaction tRNA(His) + L-histidine + ATP = L-histidyl-tRNA(His) + AMP + diphosphate + H(+). In Wolinella succinogenes (strain ATCC 29543 / DSM 1740 / CCUG 13145 / JCM 31913 / LMG 7466 / NCTC 11488 / FDC 602W) (Vibrio succinogenes), this protein is Histidine--tRNA ligase.